The primary structure comprises 163 residues: Endoribonuclease YbeY (163 aa).

Residues histidine 121, histidine 125, and histidine 131 each coordinate Zn(2+).

It belongs to the endoribonuclease YbeY family. Zn(2+) is required as a cofactor.

The protein localises to the cytoplasm. In terms of biological role, single strand-specific metallo-endoribonuclease involved in late-stage 70S ribosome quality control and in maturation of the 3' terminus of the 16S rRNA. This chain is Endoribonuclease YbeY, found in Synechococcus sp. (strain JA-3-3Ab) (Cyanobacteria bacterium Yellowstone A-Prime).